The chain runs to 810 residues: Nuclear pore complex protein NUP88 (810 aa).

Residues 1–23 (MKFNFNETEDAPDSRRSPTPKEP) form a disordered region. A coiled-coil region spans residues 646 to 748 (APNLKRIIDD…RARVKKSTQK (103 aa)).

Part of the nuclear pore complex (NPC). The NPC has an eight-fold symmetrical structure comprising a central transport channel and two rings, the cytoplasmic and nuclear rings, to which eight filaments are attached. The cytoplasmic filaments have loose ends, while the nuclear filaments are joined in a distal ring, forming a nuclear basket. NPCs are highly dynamic in configuration and composition, and can be devided in 3 subcomplexes, the NUP62 subcomplex, the NUP107-160 subcomplex and the NUP93 subcomplex, containing approximately 30 different nucleoporin proteins.

It localises to the nucleus envelope. Its subcellular location is the nucleus. The protein localises to the nuclear pore complex. Functionally, involved in the regulation of exportin-mediated nuclear protein export. Required for resistance mediated by multiple R proteins and for the appropriate nuclear accumulation of SNC1 and of the downstream defense signaling components EDS1 and NPR1. Not involved in salt tolerance, ethylene and auxin responses, but required for systemic acquired resistance. The polypeptide is Nuclear pore complex protein NUP88 (Arabidopsis thaliana (Mouse-ear cress)).